The chain runs to 22 residues: leu leader peptide (22 aa).

The disordered stretch occupies residues 1–22 (MLHHMTSRANLLLLRRGGSQRS). The segment covering 11-22 (LLLLRRGGSQRS) has biased composition (low complexity).

Functionally, involved in control of the biosynthesis of leucine. This is leu leader peptide (leuL) from Corynebacterium glutamicum (strain ATCC 13032 / DSM 20300 / JCM 1318 / BCRC 11384 / CCUG 27702 / LMG 3730 / NBRC 12168 / NCIMB 10025 / NRRL B-2784 / 534).